The sequence spans 467 residues: MKITVNRGLDLSLQGSPKESGFYNKIDPEFVSIDLRPFQPLSLKLKVEQGDAVCSGAPIAEYKHFPNTYITSHVSGVVTAIRRGNKRSLLDVIIKKTPGPTSTEYTYDLQTLSRSDLSEIFKENGLFALIKQRPFDIPAIPTQTPRDVFINLADNRPFTPSPEKHLALFSSREEGFYVFVVGVRAIAKLFGLRPHIVFRDRLTLPTQELKTIAHLHTVSGPFPSGSPSIHIHSVAPITNEKEVVFTLSFQDVLTIGHLFLKGRILHEQVTALAGTALKSSLRRYVITTKGASFSSLINLNDISDNDTLISGDPLTGRLCKKEEEPFLGFRDHSISVLHNPTKRELFSFLRIGFNKPTFTKTYLSGFFKKKRTYTNPDTNLHGETRPIIDTDIYDKVMPMRIPVVPLIKAVITKNFDLANELGFLEVCGEDFALPTLIDPSKTEMLTIVKESLIEYAKESGILTPHQD.

It belongs to the NqrA family. In terms of assembly, composed of six subunits; NqrA, NqrB, NqrC, NqrD, NqrE and NqrF.

It catalyses the reaction a ubiquinone + n Na(+)(in) + NADH + H(+) = a ubiquinol + n Na(+)(out) + NAD(+). In terms of biological role, NQR complex catalyzes the reduction of ubiquinone-1 to ubiquinol by two successive reactions, coupled with the transport of Na(+) ions from the cytoplasm to the periplasm. NqrA to NqrE are probably involved in the second step, the conversion of ubisemiquinone to ubiquinol. The sequence is that of Na(+)-translocating NADH-quinone reductase subunit A from Chlamydia pneumoniae (Chlamydophila pneumoniae).